Here is a 459-residue protein sequence, read N- to C-terminus: Argininosuccinate lyase (459 aa).

Belongs to the lyase 1 family. Argininosuccinate lyase subfamily.

It is found in the cytoplasm. The catalysed reaction is 2-(N(omega)-L-arginino)succinate = fumarate + L-arginine. Its pathway is amino-acid biosynthesis; L-arginine biosynthesis; L-arginine from L-ornithine and carbamoyl phosphate: step 3/3. The protein is Argininosuccinate lyase of Methylobacterium radiotolerans (strain ATCC 27329 / DSM 1819 / JCM 2831 / NBRC 15690 / NCIMB 10815 / 0-1).